Here is a 400-residue protein sequence, read N- to C-terminus: Cysteine desulfurase 1 (400 aa).

Pyridoxal 5'-phosphate-binding positions include 71-72 (GT), asparagine 150, glutamine 178, and 198-200 (SGH). Lysine 201 carries the post-translational modification N6-(pyridoxal phosphate)lysine. Residue threonine 236 participates in pyridoxal 5'-phosphate binding. Cysteine 324 functions as the Cysteine persulfide intermediate in the catalytic mechanism. [2Fe-2S] cluster is bound at residue cysteine 324.

Belongs to the class-V pyridoxal-phosphate-dependent aminotransferase family. NifS/IscS subfamily. As to quaternary structure, homodimer. It depends on pyridoxal 5'-phosphate as a cofactor.

It carries out the reaction (sulfur carrier)-H + L-cysteine = (sulfur carrier)-SH + L-alanine. Its function is as follows. Catalyzes the removal of elemental sulfur atoms from cysteine to produce alanine. Seems to participate in the biosynthesis of the nitrogenase metalloclusters by providing the inorganic sulfur required for the Fe-S core formation. This Trichormus variabilis (strain ATCC 29413 / PCC 7937) (Anabaena variabilis) protein is Cysteine desulfurase 1.